Here is a 196-residue protein sequence, read N- to C-terminus: Putative NADH dehydrogenase/NAD(P)H nitroreductase XOO4023 (196 aa).

The protein belongs to the nitroreductase family. HadB/RutE subfamily. It depends on FMN as a cofactor.

The protein is Putative NADH dehydrogenase/NAD(P)H nitroreductase XOO4023 of Xanthomonas oryzae pv. oryzae (strain MAFF 311018).